A 452-amino-acid chain; its full sequence is Oxygen-independent coproporphyrinogen III oxidase (452 aa).

The region spanning 45 to 278 (LDPAVPISVY…ANLAAKMFTE (234 aa)) is the Radical SAM core domain. Tyr-54 lines the S-adenosyl-L-methionine pocket. 2 residues coordinate [4Fe-4S] cluster: Cys-60 and Cys-64. S-adenosyl-L-methionine is bound at residue Phe-66. Position 67 (Cys-67) interacts with [4Fe-4S] cluster. Residues Gly-111, 112–113 (GT), Glu-144, Gln-171, Arg-183, Asp-208, Ala-242, and Ile-328 each bind S-adenosyl-L-methionine.

Belongs to the anaerobic coproporphyrinogen-III oxidase family. Monomer. [4Fe-4S] cluster is required as a cofactor.

The protein localises to the cytoplasm. It carries out the reaction coproporphyrinogen III + 2 S-adenosyl-L-methionine = protoporphyrinogen IX + 2 5'-deoxyadenosine + 2 L-methionine + 2 CO2. It participates in porphyrin-containing compound metabolism; protoporphyrin-IX biosynthesis; protoporphyrinogen-IX from coproporphyrinogen-III (AdoMet route): step 1/1. In terms of biological role, involved in the heme and chlorophyll biosynthesis. Catalyzes the anaerobic oxidative decarboxylation of propionate groups of rings A and B of coproporphyrinogen III to yield the vinyl groups in protoporphyrinogen IX. The sequence is that of Oxygen-independent coproporphyrinogen III oxidase (hemN) from Cereibacter sphaeroides (strain ATCC 17025 / ATH 2.4.3) (Rhodobacter sphaeroides).